A 611-amino-acid chain; its full sequence is Elongation factor 4 (611 aa).

In terms of domain architecture, tr-type G spans 12-194; that stretch reads SRIRNFSIIA…QIVEKVPAPA (183 aa). GTP is bound by residues 24–29 and 141–144; these read DHGKST and NKID.

Belongs to the TRAFAC class translation factor GTPase superfamily. Classic translation factor GTPase family. LepA subfamily.

The protein resides in the cell membrane. It catalyses the reaction GTP + H2O = GDP + phosphate + H(+). In terms of biological role, required for accurate and efficient protein synthesis under certain stress conditions. May act as a fidelity factor of the translation reaction, by catalyzing a one-codon backward translocation of tRNAs on improperly translocated ribosomes. Back-translocation proceeds from a post-translocation (POST) complex to a pre-translocation (PRE) complex, thus giving elongation factor G a second chance to translocate the tRNAs correctly. Binds to ribosomes in a GTP-dependent manner. The polypeptide is Elongation factor 4 (Bacillus velezensis (strain DSM 23117 / BGSC 10A6 / LMG 26770 / FZB42) (Bacillus amyloliquefaciens subsp. plantarum)).